Consider the following 540-residue polypeptide: Cytochrome P450 monooxygenase CYP3 (540 aa).

Asn-2 carries an N-linked (GlcNAc...) asparagine glycan. Residues 26 to 46 (IFGLSSSTLVVLVAMIAVSTL) form a helical membrane-spanning segment. 3 N-linked (GlcNAc...) asparagine glycosylation sites follow: Asn-100, Asn-210, and Asn-400. Cys-471 contacts heme.

This sequence belongs to the cytochrome P450 family. It depends on heme as a cofactor.

It localises to the membrane. The protein operates within secondary metabolite biosynthesis. Cytochrome P450 monooxygenase; part of the gene cluster that mediates the biosynthesis of itaconic acid and 2-hydroxyparaconate. Cis-aconitate is secreted by the mitochondrial tricarboxylate transporter MTT1. In the cytosol cis-aconitate is converted into trans-aconitate via isomerization by the aconitate-delta-isomerase ADI1. Decarboxylation of trans-aconitate by the trans-aconitate decarboxylase TAD1 then leads then to the production of itaconic acid. The cytochrome P450 monooxygenase CYP3 further converts itaconate to 2-hydroxyparaconate via oxidation of the double bond, leading to a transient epoxide, which can subsequently be lactonized to produce 2-hydroxyparaconate. Secretion of itaconate and possibly 2-hydroxyparaconate into the medium is mediated by the major facilitator ITP1. The glyoxalase domain-containing protein RDO1 is not involved in the biosynthesis of itaconate and 2-hydroxyparaconate, however, it might play a role in the further conversion of 2-hydroxyparaconate to itatartarate. The protein is Cytochrome P450 monooxygenase CYP3 of Mycosarcoma maydis (Corn smut fungus).